A 110-amino-acid polypeptide reads, in one-letter code: MKFVLLFGVLLVTLFSYSSAEMLDDFDQADEDELLSLIEKEEARKDCIPKHHECTSNKHGCCGGHLFKYKCQCTTVVTQSGEETERCFCGTPPHHKAAELVVGFGKKIFG.

The signal sequence occupies residues 1 to 20 (MKFVLLFGVLLVTLFSYSSA). The propeptide occupies 21–44 (EMLDDFDQADEDELLSLIEKEEAR). Intrachain disulfides connect Cys-47–Cys-62, Cys-54–Cys-71, Cys-61–Cys-89, and Cys-73–Cys-87.

Belongs to the neurotoxin 19 (CSTX) family. 03 subfamily. Expressed by the venom gland.

The protein localises to the secreted. In Lycosa singoriensis (Wolf spider), this protein is U1-lycotoxin-Ls1aa.